Consider the following 89-residue polypeptide: Small ribosomal subunit protein uS15 (89 aa).

This sequence belongs to the universal ribosomal protein uS15 family. As to quaternary structure, part of the 30S ribosomal subunit. Forms a bridge to the 50S subunit in the 70S ribosome, contacting the 23S rRNA.

In terms of biological role, one of the primary rRNA binding proteins, it binds directly to 16S rRNA where it helps nucleate assembly of the platform of the 30S subunit by binding and bridging several RNA helices of the 16S rRNA. Its function is as follows. Forms an intersubunit bridge (bridge B4) with the 23S rRNA of the 50S subunit in the ribosome. The polypeptide is Small ribosomal subunit protein uS15 (Nitratidesulfovibrio vulgaris (strain DSM 19637 / Miyazaki F) (Desulfovibrio vulgaris)).